The sequence spans 503 residues: Maturase K (503 aa).

It belongs to the intron maturase 2 family. MatK subfamily.

The protein localises to the plastid. It is found in the chloroplast. Usually encoded in the trnK tRNA gene intron. Probably assists in splicing its own and other chloroplast group II introns. The chain is Maturase K from Vicia faba (Broad bean).